The primary structure comprises 553 residues: Sulfatase (553 aa).

The first 25 residues, 1-25 (MTSEMKKFSKIVLFGLLISPLLASS), serve as a signal peptide directing secretion. Residues aspartate 43, aspartate 44, and cysteine 88 each contribute to the Ca(2+) site. The active-site Nucleophile is the cysteine 88. Residue cysteine 88 is modified to 3-oxoalanine (Cys). Histidine 159 is a catalytic residue. 2 residues coordinate Ca(2+): aspartate 350 and asparagine 351.

It belongs to the sulfatase family. Requires Ca(2+) as cofactor. Post-translationally, the conversion to 3-oxoalanine (also known as C-formylglycine, FGly), of a serine or cysteine residue in prokaryotes and of a cysteine residue in eukaryotes, is critical for catalytic activity. This post-translational modification is severely defective in multiple sulfatase deficiency (MSD).

The protein resides in the secreted. Sulfatase that may be involved in ulvan degradation. Ulvan is the main polysaccharide component of the Ulvales (green seaweed) cell wall. It is composed of disaccharide building blocks comprising 3-sulfated rhamnose (Rha3S) linked to D-glucuronic acid (GlcA), L-iduronic acid (IduA), or D-xylose (Xyl). In Formosa agariphila (strain DSM 15362 / KCTC 12365 / LMG 23005 / KMM 3901 / M-2Alg 35-1), this protein is Sulfatase.